The sequence spans 354 residues: Homeobox protein Nkx-2.4 (354 aa).

Residues 189-248 (RRKRRVLFSQAQVYELERRFKQQKYLSAPEREHLASMIHLTPTQVKIWFQNHRYKMKRQA) constitute a DNA-binding region (homeobox). Residues 246-329 (RQAKDKAAQQ…PALHGPGGGL (84 aa)) are disordered. A compositionally biased stretch (pro residues) spans 263-272 (GPPPPPPPSP).

The protein belongs to the NK-2 homeobox family.

Its subcellular location is the nucleus. In terms of biological role, probable transcription factor. This chain is Homeobox protein Nkx-2.4 (NKX2-4), found in Homo sapiens (Human).